A 333-amino-acid chain; its full sequence is MASQNTEQEYEAKLAPSVGGEPTSGGPSGSSPDPNPDSSEVLDRHEDQAMSQDPGSQDNSPPEDRNQRVVNVEDNHNLFRLSFPRKLWTIVEEDTFKSVSWNDDGDAVIIDKDLFQREVLQRKGAERIFKTDSLTSFIRQLNLYGFCKTRPSNSPGNKKMMIYCNSNFQRDKPRLLENIQRKDALRNTAQQATRVPTPKRKNLVATRRSLRIYHINARKEAIKMCQQGAPSVQGPSGTQSFRRSGMWSKKSATRHPLGNGPPQEPNGPSWEGTSGNVTFTSSATTWMEGTGILSSLVYSDNGSVMSLYNICYYALLASLSVMSPNEPSDDEEE.

Residues 1–66 form a disordered region; it reads MASQNTEQEY…QDNSPPEDRN (66 aa). Residues 29–39 are compositionally biased toward low complexity; that stretch reads GSSPDPNPDSS. A compositionally biased stretch (polar residues) spans 49–60; it reads AMSQDPGSQDNS. The DNA-binding element occupies 79–182; it reads FRLSFPRKLW…PRLLENIQRK (104 aa). A disordered region spans residues 227–275; it reads QGAPSVQGPSGTQSFRRSGMWSKKSATRHPLGNGPPQEPNGPSWEGTSG. A compositionally biased stretch (polar residues) spans 228–242; the sequence is GAPSVQGPSGTQSFR.

This sequence belongs to the HSF family.

Its subcellular location is the nucleus. The sequence is that of Heat shock transcription factor, X-linked member 3 from Homo sapiens (Human).